A 511-amino-acid chain; its full sequence is 2-isopropylmalate synthase (511 aa).

Positions Ile-6–Phe-269 constitute a Pyruvate carboxyltransferase domain. 4 residues coordinate Mn(2+): Asp-15, His-203, His-205, and Asn-239. The tract at residues Ile-394–Ala-511 is regulatory domain.

Belongs to the alpha-IPM synthase/homocitrate synthase family. LeuA type 1 subfamily. Homodimer. Mn(2+) serves as cofactor.

It localises to the cytoplasm. It catalyses the reaction 3-methyl-2-oxobutanoate + acetyl-CoA + H2O = (2S)-2-isopropylmalate + CoA + H(+). The protein operates within amino-acid biosynthesis; L-leucine biosynthesis; L-leucine from 3-methyl-2-oxobutanoate: step 1/4. Its function is as follows. Catalyzes the condensation of the acetyl group of acetyl-CoA with 3-methyl-2-oxobutanoate (2-ketoisovalerate) to form 3-carboxy-3-hydroxy-4-methylpentanoate (2-isopropylmalate). This Campylobacter jejuni subsp. jejuni serotype O:6 (strain 81116 / NCTC 11828) protein is 2-isopropylmalate synthase.